Here is a 247-residue protein sequence, read N- to C-terminus: Small ribosomal subunit protein uS3 (247 aa).

One can recognise a KH type-2 domain in the interval 39 to 109; the sequence is IRSMIRSFPE…KVQIKVKEIK (71 aa). The segment at 224-247 is disordered; that stretch reads RSRRESGQKSDELVRDERTHAERG. Basic and acidic residues predominate over residues 227 to 247; the sequence is RESGQKSDELVRDERTHAERG.

This sequence belongs to the universal ribosomal protein uS3 family. In terms of assembly, part of the 30S ribosomal subunit. Forms a tight complex with proteins S10 and S14.

In terms of biological role, binds the lower part of the 30S subunit head. Binds mRNA in the 70S ribosome, positioning it for translation. This Treponema pallidum (strain Nichols) protein is Small ribosomal subunit protein uS3.